We begin with the raw amino-acid sequence, 377 residues long: Cytochrome b (377 aa).

4 helical membrane-spanning segments follow: residues 34–54 (FGFL…FLSM), 78–100 (WLLR…IHIA), 113–133 (TWMT…LGYV), and 179–199 (FFTL…IHLL). The heme b site is built by His-84 and His-98. Positions 183 and 197 each coordinate heme b. His-202 provides a ligand contact to a ubiquinone. 4 helical membrane-spanning segments follow: residues 225 to 245 (FTIK…ILVL), 288 to 308 (KLGG…LPLY), 323 to 343 (MLFW…AQAI), and 352 to 372 (QILT…SVLW).

Belongs to the cytochrome b family. As to quaternary structure, the main subunits of complex b-c1 are: cytochrome b, cytochrome c1 and the Rieske protein. It depends on heme b as a cofactor.

It localises to the mitochondrion inner membrane. In terms of biological role, component of the ubiquinol-cytochrome c reductase complex (complex III or cytochrome b-c1 complex) that is part of the mitochondrial respiratory chain. The b-c1 complex mediates electron transfer from ubiquinol to cytochrome c. Contributes to the generation of a proton gradient across the mitochondrial membrane that is then used for ATP synthesis. The sequence is that of Cytochrome b (mt:Cyt-b) from Priapulus caudatus (Priapulid worm).